A 235-amino-acid chain; its full sequence is MIYAGILAGGTGTRMGISNLPKQFLELGDRPILIHTIEKFVLEPSIEKIVVGVHGDWVSHAEDLVDKYLPLYKERIIITKGGADRNTSIKKIIEAIDAYRPLTPEDIVVTHDSVRPFITLRMIQDNIQLAQNHDAVDTVVEAVDTIVESTNGQFITDIPNRAHLYQGQTPQTFRCKDFMDLYGSLSDEEKEIWTDACKIFVIKGKDVALAKGEYSNLKITTVTDLKIAKSMIEKD.

CTP-binding positions include 7 to 10, 82 to 88, and Ser113; these read LAGG and GADRNTS.

This sequence belongs to the IspD/TarI cytidylyltransferase family. TarI subfamily.

It catalyses the reaction D-ribitol 5-phosphate + CTP + H(+) = CDP-L-ribitol + diphosphate. It functions in the pathway cell wall biogenesis; poly(ribitol phosphate) teichoic acid biosynthesis. Catalyzes the transfer of the cytidylyl group of CTP to D-ribitol 5-phosphate. The polypeptide is Ribitol-5-phosphate cytidylyltransferase (Streptococcus pneumoniae (strain CGSP14)).